Reading from the N-terminus, the 501-residue chain is Lysine--tRNA ligase (501 aa).

The Mg(2+) site is built by Glu404 and Glu411.

The protein belongs to the class-II aminoacyl-tRNA synthetase family. In terms of assembly, homodimer. Requires Mg(2+) as cofactor.

The protein resides in the cytoplasm. It catalyses the reaction tRNA(Lys) + L-lysine + ATP = L-lysyl-tRNA(Lys) + AMP + diphosphate. The protein is Lysine--tRNA ligase of Campylobacter jejuni (strain RM1221).